Reading from the N-terminus, the 606-residue chain is WD repeat-containing protein 1 (606 aa).

WD repeat units lie at residues 4–45, 48–87, 93–135, 138–176, 180–218, 224–263, 270–306, 311–351, 358–408, 432–474, 480–518, 523–561, and 566–604; these read EIKK…LRNI, PAIA…IWDT, LLKY…LWDS, SVGE…FFEG, KFKF…IYDG, VCAL…IWDV, NTFT…YLDK, KPLR…YWDS, SFAG…KLDV, LKDQ…LYSI, KDEG…VFSV, SENN…VWTL, and TRVK…EWTI. Residues K28, K81, K95, and K115 each carry the N6-acetyllysine modification. Y238 carries the phosphotyrosine modification. Residue K480 is modified to N6-acetyllysine.

Belongs to the WD repeat AIP1 family.

The protein resides in the cytoplasm. The protein localises to the cytoskeleton. It localises to the cell projection. It is found in the podosome. Induces disassembly of actin filaments in conjunction with ADF/cofilin family proteins. Enhances cofilin-mediated actin severing. Involved in cytokinesis. Involved in chemotactic cell migration by restricting lamellipodial membrane protrusions. Involved in myocardium sarcomere organization. Required for cardiomyocyte growth and maintenance. Involved in megakaryocyte maturation and platelet shedding. Required for the establishment of planar cell polarity (PCP) during follicular epithelium development and for cell shape changes during PCP; the function seems to implicate cooperation with CFL1 and/or DSTN/ADF. Involved in the generation/maintenance of cortical tension. Involved in assembly and maintenance of epithelial apical cell junctions and plays a role in the organization of the perijunctional actomyosin belt. The protein is WD repeat-containing protein 1 (WDR1) of Bos taurus (Bovine).